The chain runs to 80 residues: Acyl carrier protein (80 aa).

The Carrier domain maps to methionine 1 to asparagine 76. At serine 36 the chain carries O-(pantetheine 4'-phosphoryl)serine.

Belongs to the acyl carrier protein (ACP) family. Post-translationally, 4'-phosphopantetheine is transferred from CoA to a specific serine of apo-ACP by AcpS. This modification is essential for activity because fatty acids are bound in thioester linkage to the sulfhydryl of the prosthetic group.

Its subcellular location is the cytoplasm. The protein operates within lipid metabolism; fatty acid biosynthesis. Functionally, carrier of the growing fatty acid chain in fatty acid biosynthesis. The polypeptide is Acyl carrier protein (Syntrophus aciditrophicus (strain SB)).